An 806-amino-acid chain; its full sequence is Phenylalanine--tRNA ligase beta subunit (806 aa).

One can recognise a tRNA-binding domain in the interval N40–L155. A B5 domain is found at V409 to V484. Positions 462, 468, 471, and 472 each coordinate Mg(2+). One can recognise an FDX-ACB domain in the interval P712–R805.

This sequence belongs to the phenylalanyl-tRNA synthetase beta subunit family. Type 1 subfamily. As to quaternary structure, tetramer of two alpha and two beta subunits. Mg(2+) is required as a cofactor.

The protein localises to the cytoplasm. It carries out the reaction tRNA(Phe) + L-phenylalanine + ATP = L-phenylalanyl-tRNA(Phe) + AMP + diphosphate + H(+). The chain is Phenylalanine--tRNA ligase beta subunit from Bacillus cereus (strain ZK / E33L).